The primary structure comprises 116 residues: MRHQCRVPLLGKPADQRKALLRSLTTELIRHGQIMTTKTRAKAVRSEVERMITLAKDGSLAARRRALGYMYDKQLVHSLFADVQSRYGNRNGGYTRITRTLRRRGDNAEMAIIELV.

It belongs to the bacterial ribosomal protein bL17 family. As to quaternary structure, part of the 50S ribosomal subunit. Contacts protein L32.

This Rippkaea orientalis (strain PCC 8801 / RF-1) (Cyanothece sp. (strain PCC 8801)) protein is Large ribosomal subunit protein bL17.